The chain runs to 162 residues: Onchocystatin (162 aa).

A signal peptide spans M1 to A32. Residues A30–G54 form a disordered region. Basic and acidic residues predominate over residues S36–D47. A Secondary area of contact motif is present at residues Q97–G101. The cysteines at positions 115 and 128 are disulfide-linked.

Belongs to the cystatin family. As to expression, expressed in the cuticle of L3 and L4 larvae, female adult, and in the eggshell of developing microfilariae.

Functionally, cysteine protease inhibitor which inhibits members of the peptidase C1 family. In the human host, inhibits CTSL/cathepsin L and CTSS/cathepsin S and to a lesser extent CTSB/cathepsin B which may cause defects in antigen processing and thereby impair antigen-driven T cell proliferation. The polypeptide is Onchocystatin (Onchocerca volvulus).